Consider the following 58-residue polypeptide: Conotoxin TxXIIIA (58 aa).

Positions 1–22 (MRCLPVFVILLLLIASVPSVDA) are cleaved as a signal peptide. The propeptide occupies 23-46 (ELKAKDDMPQASFHDNAERDQQKK).

Homodimer; disulfide-linked. Post-translationally, 5 disulfide bonds are present in each homodimer: two intrachain disulfide bonds per subunit, and one interchain disulfide bond linking the two subunits. In terms of tissue distribution, expressed by the venom duct.

Its subcellular location is the secreted. The sequence is that of Conotoxin TxXIIIA from Conus textile (Cloth-of-gold cone).